Consider the following 283-residue polypeptide: Ribose-phosphate pyrophosphokinase (283 aa).

ATP contacts are provided by residues 34 to 36 and 89 to 90; these read DGE and RQ. 2 residues coordinate Mg(2+): His120 and Asp159. Residue Lys182 is part of the active site. Arg184 and Asp208 together coordinate D-ribose 5-phosphate.

The protein belongs to the ribose-phosphate pyrophosphokinase family. Class III (archaeal) subfamily. Mg(2+) is required as a cofactor.

It localises to the cytoplasm. It catalyses the reaction D-ribose 5-phosphate + ATP = 5-phospho-alpha-D-ribose 1-diphosphate + AMP + H(+). It participates in metabolic intermediate biosynthesis; 5-phospho-alpha-D-ribose 1-diphosphate biosynthesis; 5-phospho-alpha-D-ribose 1-diphosphate from D-ribose 5-phosphate (route I): step 1/1. In terms of biological role, involved in the biosynthesis of the central metabolite phospho-alpha-D-ribosyl-1-pyrophosphate (PRPP) via the transfer of pyrophosphoryl group from ATP to 1-hydroxyl of ribose-5-phosphate (Rib-5-P). The polypeptide is Ribose-phosphate pyrophosphokinase (Methanosarcina acetivorans (strain ATCC 35395 / DSM 2834 / JCM 12185 / C2A)).